Reading from the N-terminus, the 95-residue chain is Endoribonuclease VapD homolog (95 aa).

It belongs to the VapD ribonuclease family. Homodimer.

Cleaves ssRNA, mostly between U:A. The polypeptide is Endoribonuclease VapD homolog (Helicobacter pylori (strain ATCC 700392 / 26695) (Campylobacter pylori)).